A 210-amino-acid polypeptide reads, in one-letter code: MKFAKIPMATIIRLSIYMRTLQELLEDDVDVISSERLAKQCGVNPAQIRKDLAYFGEFGVRGVGYRVNELVNQIKEILGLNRPWNLAMVGLGNLGSALIRHGNFIKHGYMFTAAFDVDPQKVGKRLPNGLVINHVDELEDVIKEREVHVGIITTPASEAQSVANQLVLAGINGILNFAPVQIQVPDCCHVENVDFTIKLDSIAYHLSFGS.

The H-T-H motif DNA-binding region spans 16–55; sequence IYMRTLQELLEDDVDVISSERLAKQCGVNPAQIRKDLAYF. Residue 90 to 95 participates in NAD(+) binding; sequence GLGNLG.

The protein belongs to the transcriptional regulatory Rex family. In terms of assembly, homodimer.

Its subcellular location is the cytoplasm. Functionally, modulates transcription in response to changes in cellular NADH/NAD(+) redox state. This Syntrophobacter fumaroxidans (strain DSM 10017 / MPOB) protein is Redox-sensing transcriptional repressor Rex.